Consider the following 678-residue polypeptide: Geranylgeranyl transferase type-2 subunit alpha 1 (678 aa).

5 PFTA repeats span residues 40–74, 86–120, 121–155, 156–190, and 201–235; these read YTNEAIELSTKLLEINPEAYTAWNYRKLAVEDRLA, ILDEELRVVESALRQNFKSYGAWHHRKWVLSKGHS, SVGNELRLLEKFQKLDSRNFHAWNYRRFVVELTNR, SEQDELQYTDDMINNNFSNYSAWHNRSVLLSSLLA, and KIPEEYDFVHSAIFTEPDDQSGWFYHLWLLDQTLN. LRR repeat units follow at residues 510-532, 533-554, 555-578, 580-604, and 638-663; these read MNNLVCLRLNNLSLSRIASVEKL, LFVQMLDLSHNELHSTEGLEAM, QLLSCLNLSHNRIRSFSALDSLRH, KQLKVLDVSHNHIGKHSVDTTRYLC, and DLNLKQLDIAGNEIAGEEFSSFVLQV.

It belongs to the protein prenyltransferase subunit alpha family. Heterotrimer composed of the alpha subunit RGTA, the beta subunit RGTB and REP; within this trimer, RGTA and RGTB form the catalytic component, while REP mediates peptide substrate binding.

It catalyses the reaction geranylgeranyl diphosphate + L-cysteinyl-[protein] = S-geranylgeranyl-L-cysteinyl-[protein] + diphosphate. With respect to regulation, the enzymatic reaction requires the aid of the Rab escort protein REP. Catalyzes the transfer of a geranylgeranyl moiety from geranylgeranyl diphosphate to both cysteines of Rab proteins with the C-terminal sequence -CCXX, CXXX, -XCCX and -XCXC, such as RABA1A, RABA2A, RABF2A and RABG2. In vitro, can prenylate PGGTI targets with the C-terminal Cys-aliphatic-aliphatic-X (CaaX) with leucine in the terminal position. Substrates with the C-terminal sequence -CSIL such as ARAC11/ROP1 or GG2/AGG2 are prenylated independently of REP and when the alpha subunit is associated with a beta subunit (RGTB1 or RGTB2). The sequence is that of Geranylgeranyl transferase type-2 subunit alpha 1 from Arabidopsis thaliana (Mouse-ear cress).